A 766-amino-acid chain; its full sequence is 5-methyltetrahydropteroyltriglutamate--homocysteine methyltransferase (766 aa).

Residues 16–19 (RELK) and Lys-119 each bind 5-methyltetrahydropteroyltri-L-glutamate. Residues 440–442 (IGS) and Glu-493 contribute to the L-homocysteine site. Residues 440–442 (IGS) and Glu-493 each bind L-methionine. Residues 524 to 525 (RC) and Trp-570 contribute to the 5-methyltetrahydropteroyltri-L-glutamate site. Asp-608 contributes to the L-homocysteine binding site. Residue Asp-608 participates in L-methionine binding. Glu-614 contributes to the 5-methyltetrahydropteroyltri-L-glutamate binding site. Residues His-650, Cys-652, and Glu-674 each contribute to the Zn(2+) site. The active-site Proton donor is the His-703. Zn(2+) is bound at residue Cys-735.

Belongs to the vitamin-B12 independent methionine synthase family. It depends on Zn(2+) as a cofactor.

The catalysed reaction is 5-methyltetrahydropteroyltri-L-glutamate + L-homocysteine = tetrahydropteroyltri-L-glutamate + L-methionine. It participates in amino-acid biosynthesis; L-methionine biosynthesis via de novo pathway; L-methionine from L-homocysteine (MetE route): step 1/1. Catalyzes the transfer of a methyl group from 5-methyltetrahydrofolate to homocysteine resulting in methionine formation. This Pseudomonas aeruginosa (strain UCBPP-PA14) protein is 5-methyltetrahydropteroyltriglutamate--homocysteine methyltransferase.